A 257-amino-acid polypeptide reads, in one-letter code: Phosphonates import ATP-binding protein PhnC (257 aa).

Residues 2 to 246 enclose the ABC transporter domain; it reads IEFRNVSKVY…KFAEIYGDVV (245 aa). 35–42 provides a ligand contact to ATP; that stretch reads GLSGAGKS.

It belongs to the ABC transporter superfamily. Phosphonates importer (TC 3.A.1.9.1) family. In terms of assembly, the complex is composed of two ATP-binding proteins (PhnC), two transmembrane proteins (PhnE) and a solute-binding protein (PhnD).

It localises to the cell membrane. It carries out the reaction phosphonate(out) + ATP + H2O = phosphonate(in) + ADP + phosphate + H(+). Part of the ABC transporter complex PhnCDE involved in phosphonates import. Responsible for energy coupling to the transport system. This is Phosphonates import ATP-binding protein PhnC from Bacillus anthracis.